Reading from the N-terminus, the 402-residue chain is Nodulation protein E (402 aa).

The Ketosynthase family 3 (KS3) domain maps to 2-401 (DRRVVITGIG…GMNAVLAFRQ (400 aa)). Residues C162, H294, and H331 each act as for beta-ketoacyl synthase activity in the active site. A helical transmembrane segment spans residues 329 to 348 (HAHCLGAASALEMIACVMAI).

It belongs to the thiolase-like superfamily. Beta-ketoacyl-ACP synthases family.

Its subcellular location is the cell inner membrane. Its function is as follows. Proposed to synthesize NOD factor fatty acyl chain. Involved in the synthesis of a highly unsaturated fatty acid moiety, which forms part of a lipo-oligosaccharide that is responsible for host specificity. The sequence is that of Nodulation protein E (nodE) from Rhizobium sp. (strain N33).